We begin with the raw amino-acid sequence, 423 residues long: Phthiocerol/phthiodiolone dimycocerosyl transferase (423 aa).

His-125 acts as the Proton acceptor in catalysis.

The protein belongs to the acyltransferase PapA5 family. Monomer. Interacts directly with the acyl carrier protein (ACP) domain of the mycocerosic acid synthase (mas) protein.

The enzyme catalyses 2 a mycocerosyl-[mycocerosic acid synthase] + a phthiocerol = a dimycocerosyl phthiocerol + 2 holo-[mycocerosic acid synthase].. It catalyses the reaction 2 a mycocerosyl-[mycocerosic acid synthase] + a phthiodiolone = a dimycocerosyl phthiodiolone + 2 holo-[mycocerosic acid synthase].. The catalysed reaction is 2 a mycocerosyl-[mycocerosic acid synthase] + a phenolphthiocerol = a dimycocerosyl phenolphthiocerol + 2 holo-[mycocerosic acid synthase].. Its function is as follows. Catalyzes diesterification of phthiocerol, phthiodiolone, and phenolphthiocerol with mycocerosic acids, the final step in the phthiocerol, phthiodiolone and phenolphthiocerol dimycocerosate esters (PDIM) synthesis. Can directly transfer the mycocerosate bound to the mycocerosic acid synthase (mas) onto the substrate alcohols. This is Phthiocerol/phthiodiolone dimycocerosyl transferase (papA5) from Mycobacterium leprae (strain TN).